The chain runs to 364 residues: MTAAQIHSDCSVHMLPRHVKEDVEPIHLLGFNIARKPKWLQFVLLSLAIFILYIGYGYMQELIFKLPGMKPFGWTLTLIQFLIYSGCGYTECIIWHNTKRMIPWRIYGVIAFFTVATMGLSNASVGYLNYPTQVIFKCCKLIPVLIGGILIQGKRYGWIDIGAAMLMSLGIIMFTLADNKVSPNFDSRGYIMICGALLADAVIGNIQEKNMKKYGGSSNEMVLYSYGIGSVFIFAFVVLSGEVFSAIPFFLENSWKTFGYALILSCLGYLGVNVVLTHIKVFGALVAVTVTTLRKALTIILSFMLFSKPFTIEYVYAGSVVMLAIYLNLYSKNKTSWDNMIRRFVARAMGYHDVSVARKDPMTV.

10 consecutive transmembrane segments (helical) span residues 39–59 (WLQF…YGYM), 74–94 (WTLT…ECII), 106–126 (IYGV…ASVG), 131–151 (PTQV…GILI), 157–177 (GWID…FTLA), 187–206 (SRGY…IGNI), 231–251 (VFIF…PFFL), 257–277 (TFGY…VVLT), 281–301 (VFGA…TIIL), and 310–330 (FTIE…LNLY).

The protein belongs to the nucleotide-sugar transporter family. SLC35B subfamily.

It localises to the golgi apparatus membrane. Mediates the transport of adenosine 3'-phospho 5'-phosphosulfate (PAPS), from cytosol into Golgi. PAPS is a universal sulfuryl donor for sulfation events that take place in the Golgi. The polypeptide is Adenosine 3'-phospho 5'-phosphosulfate transporter 2 (pst-2) (Caenorhabditis elegans).